A 97-amino-acid polypeptide reads, in one-letter code: Putative defensin-like protein 240 (97 aa).

A signal peptide spans 1–23; that stretch reads MRYTTSFIVFCFYIFLFTNLVQG. Intrachain disulfides connect C29-C88, C39-C69, C47-C85, and C67-C87.

It belongs to the DEFL family.

The protein resides in the secreted. In Arabidopsis thaliana (Mouse-ear cress), this protein is Putative defensin-like protein 240 (SCRL18).